A 373-amino-acid chain; its full sequence is XK-related protein 9 (373 aa).

The next 8 helical transmembrane spans lie at 8-28 (FMMS…DIVL), 38-58 (YVLG…VHCF), 166-186 (MVIM…QIAL), 206-226 (LFYK…LLFV), 230-250 (VALL…FINH), 256-276 (SVSM…FTFF), 295-315 (VLGT…IFNS), and 318-338 (FIPI…FLGV).

It belongs to the XK family. In terms of processing, undergoes proteolytic processing by caspase-3 (CASP3), caspase-6 (CASP6) and caspase-7 (CASP7) to generate the XK-related protein 9, processed form, leading to its activation. As to expression, highly expressed in the small intestines; weakly expressed in the pancreas, liver, stomach, and large intestines.

It localises to the cell membrane. The catalysed reaction is a 1,2-diacyl-sn-glycero-3-phospho-L-serine(in) = a 1,2-diacyl-sn-glycero-3-phospho-L-serine(out). Its activity is regulated as follows. Activated upon caspase cleavage to generate the XK-related protein 9, processed form. Does not act prior the onset of apoptosis. Its function is as follows. Phospholipid scramblase that promotes phosphatidylserine exposure on apoptotic cell surface. Phosphatidylserine is a specific marker only present at the surface of apoptotic cells and acts as a specific signal for engulfment. This is XK-related protein 9 from Mus musculus (Mouse).